Consider the following 216-residue polypeptide: Uracil phosphoribosyltransferase (216 aa).

30-34 (KNLVR) provides a ligand contact to GTP. 5-phospho-alpha-D-ribose 1-diphosphate is bound by residues Arg-80, Arg-105, and 140 to 148 (DPMIATAST). Residues Ile-203 and 208-210 (GDA) contribute to the uracil site. Asp-209 is a 5-phospho-alpha-D-ribose 1-diphosphate binding site.

This sequence belongs to the UPRTase family. Mg(2+) is required as a cofactor.

It carries out the reaction UMP + diphosphate = 5-phospho-alpha-D-ribose 1-diphosphate + uracil. Its pathway is pyrimidine metabolism; UMP biosynthesis via salvage pathway; UMP from uracil: step 1/1. Its activity is regulated as follows. Allosterically activated by GTP. In terms of biological role, catalyzes the conversion of uracil and 5-phospho-alpha-D-ribose 1-diphosphate (PRPP) to UMP and diphosphate. The chain is Uracil phosphoribosyltransferase from Saccharolobus islandicus (strain Y.N.15.51 / Yellowstone #2) (Sulfolobus islandicus).